The sequence spans 605 residues: Anaerobic ribonucleoside-triphosphate reductase (605 aa).

DCTP contacts are provided by His64 and His66. DGTP-binding residues include His64, His66, Asp67, Glu100, and Lys103. Residues Glu100, Lys103, Gln114, Lys146, and 445–448 (AENL) contribute to the dCTP site. Positions 100, 103, 114, and 146 each coordinate dATP. Glu100 is a binding site for dTTP. 2 residues coordinate dTTP: Gln114 and Lys146. DGTP-binding residues include Lys146, Asn447, and Leu448. One can recognise a Glycine radical domain in the interval 482 to 605 (ENITPFEKIS…KEIMHRVKHQ (124 aa)). Cys543, Cys546, Cys561, and Cys564 together coordinate Zn(2+). Gly580 is modified (glycine radical).

The protein belongs to the anaerobic ribonucleoside-triphosphate reductase family. In terms of assembly, homodimer. Forms a tetramer composed of two NrdD and two NrdG subunits.

The catalysed reaction is a ribonucleoside 5'-triphosphate + formate + H(+) = a 2'-deoxyribonucleoside 5'-triphosphate + CO2 + H2O. Activated under anaerobic conditions by NrdG, a tightly associated activase. Activation involves the formation of a glycyl radical at Gly-580. Its function is as follows. Catalyzes the conversion of ribonucleotides into deoxyribonucleotides, which are required for DNA synthesis and repair. This chain is Anaerobic ribonucleoside-triphosphate reductase, found in Enterobacteria phage T4 (Bacteriophage T4).